Here is a 190-residue protein sequence, read N- to C-terminus: Protein LIGHT-DEPENDENT SHORT HYPOCOTYLS 1 (190 aa).

The span at 1–26 (MDLISHQPNKNPNSSTQLTPPSSSRY) shows a compositional bias: polar residues. Disordered stretches follow at residues 1-28 (MDLI…RYEN) and 145-190 (GVSY…GATV). Residues 25-152 (RYENQKRRDW…ARGVSYEKKR (128 aa)) form the ALOG domain. A Nuclear localization signal motif is present at residues 150–154 (KKRKR). The segment covering 158 to 179 (QKPQTQPPLQLQQQQQQPQQGQ) has biased composition (low complexity). Polar residues predominate over residues 180–190 (SMMANYSGATV).

Belongs to the plant homeotic and developmental regulators ALOG protein family. As to expression, expressed in hypocotyls, shoot apices and lateral root primordia and, weakly, in vascular tissues.

It localises to the nucleus. Its function is as follows. Probable transcription regulator that acts as a developmental regulator by promoting cell growth in response to continuous red (cR), far-red (cFR) and blue (cB) light in a phytochrome-dependent manner, at least during seedling development. The polypeptide is Protein LIGHT-DEPENDENT SHORT HYPOCOTYLS 1 (LSH1) (Arabidopsis thaliana (Mouse-ear cress)).